The chain runs to 188 residues: MLQLHPSEIKDIVLNGGVIAYPTEAVYGLGCDPDNDTAIQKLLAVKQRPWQKGLILVASEFSQLVDYVDESQLSAEQLEFAFSKWPGPFTFVMPIKPHVSRYLCGEFDSIAVRVSAHEGVRALCQALGKPLVSTSANLAGEDPALSGDEILNAFEGKIDALVLGSLGEQRQPSTIIDARSGKILRNGQ.

In terms of domain architecture, YrdC-like spans 3 to 188 (QLHPSEIKDI…RSGKILRNGQ (186 aa)).

Belongs to the SUA5 family. TsaC subfamily.

The protein localises to the cytoplasm. The enzyme catalyses L-threonine + hydrogencarbonate + ATP = L-threonylcarbamoyladenylate + diphosphate + H2O. In terms of biological role, required for the formation of a threonylcarbamoyl group on adenosine at position 37 (t(6)A37) in tRNAs that read codons beginning with adenine. Catalyzes the conversion of L-threonine, HCO(3)(-)/CO(2) and ATP to give threonylcarbamoyl-AMP (TC-AMP) as the acyladenylate intermediate, with the release of diphosphate. This chain is Threonylcarbamoyl-AMP synthase, found in Shewanella sp. (strain MR-4).